A 146-amino-acid polypeptide reads, in one-letter code: Ribonuclease H (146 aa).

Positions Glu-4 to Val-145 constitute an RNase H type-1 domain. Positions 13, 51, 73, and 137 each coordinate Mg(2+).

This sequence belongs to the RNase H family. As to quaternary structure, monomer. Mg(2+) serves as cofactor.

It localises to the cytoplasm. It carries out the reaction Endonucleolytic cleavage to 5'-phosphomonoester.. Endonuclease that specifically degrades the RNA of RNA-DNA hybrids. The polypeptide is Ribonuclease H (Ehrlichia ruminantium (strain Gardel)).